The primary structure comprises 378 residues: Neutral protease 2 homolog ARB_04336 (378 aa).

The first 19 residues, 1–19 (MKFFTALAAVGALLAPAVA), serve as a signal peptide directing secretion. A propeptide spanning residues 20–186 (LPTPASEASH…DYFSKGLDKR (167 aa)) is cleaved from the precursor. Intrachain disulfides connect C192–C262 and C269–C287. Position 311 (H311) interacts with Zn(2+). Residue E312 is part of the active site. Residues H315 and D326 each contribute to the Zn(2+) site.

This sequence belongs to the peptidase M35 family. It depends on Zn(2+) as a cofactor.

The protein resides in the secreted. The catalysed reaction is Preferential cleavage of bonds with hydrophobic residues in P1'. Also 3-Asn-|-Gln-4 and 8-Gly-|-Ser-9 bonds in insulin B chain.. Its function is as follows. Secreted metalloproteinase that allows assimilation of proteinaceous substrates. Shows high activities on basic nuclear substrates such as histone and protamine. May be involved in virulence. The chain is Neutral protease 2 homolog ARB_04336 from Arthroderma benhamiae (strain ATCC MYA-4681 / CBS 112371) (Trichophyton mentagrophytes).